Reading from the N-terminus, the 202-residue chain is Small ribosomal subunit protein uS4 (202 aa).

Residues 18 to 42 form a disordered region; that stretch reads LPGLTRKAAKRSYPPGQHGQARRKR. Positions 90 to 152 constitute an S4 RNA-binding domain; it reads NRLDNVCFRL…KPSKKLAETN (63 aa).

Belongs to the universal ribosomal protein uS4 family. As to quaternary structure, part of the 30S ribosomal subunit. Contacts protein S5. The interaction surface between S4 and S5 is involved in control of translational fidelity.

In terms of biological role, one of the primary rRNA binding proteins, it binds directly to 16S rRNA where it nucleates assembly of the body of the 30S subunit. Its function is as follows. With S5 and S12 plays an important role in translational accuracy. The chain is Small ribosomal subunit protein uS4 from Synechococcus sp. (strain RCC307).